Reading from the N-terminus, the 84-residue chain is uncharacterized protein (84 aa).

Over residues 34 to 54 (ATSTASSSAAKNTTSSSKNAA) the composition is skewed to low complexity. Residues 34 to 57 (ATSTASSSAAKNTTSSSKNAAPGM) form a disordered region. N-linked (GlcNAc...) asparagine glycosylation occurs at N45. The helical transmembrane segment at 66 to 83 (YGIIMAAFAAVSFVLGTG) threads the bilayer.

The protein localises to the endoplasmic reticulum membrane. This is an uncharacterized protein from Saccharomyces cerevisiae (strain ATCC 204508 / S288c) (Baker's yeast).